The primary structure comprises 954 residues: ATPase 9, plasma membrane-type (954 aa).

Residues 1 to 66 (MAGNKDSSWD…EKKENKVLKF (66 aa)) lie on the Cytoplasmic side of the membrane. The chain crosses the membrane as a helical span at residues 67 to 86 (LGFMWNPLSWVMELAAIMAI). Residues 87–98 (ALANGGGRPPDW) are Extracellular-facing. A helical membrane pass occupies residues 99-119 (QDFVGITVLLIINSTISFIEE). At 120-248 (NNAGNAAAAL…GHFQKVLTAI (129 aa)) the chain is on the cytoplasmic side. A helical transmembrane segment spans residues 249-269 (GNFCICSIAIGMLIEIVVMYP). Over 270–278 (IQKRAYRDG) the chain is Extracellular. A helical transmembrane segment spans residues 279-296 (IDNLLVLLIGGIPIAMPT). The Cytoplasmic segment spans residues 297 to 648 (VLSVTMAIGS…TSRAIFQRMK (352 aa)). Aspartate 334 acts as the 4-aspartylphosphate intermediate in catalysis. Residues aspartate 593 and aspartate 597 each contribute to the Mg(2+) site. A helical transmembrane segment spans residues 649–670 (NYTIYAVSITIRIVMGFMLLAL). Topologically, residues 671–675 (IWKFD) are extracellular. A helical transmembrane segment spans residues 676–698 (FSPFMVLIVAILNDGTIMTISKD). The Cytoplasmic segment spans residues 699–714 (RVKPSPLPDSWKLKEI). The chain crosses the membrane as a helical span at residues 715–735 (FATGVVLGTYLAVMTVVFFWA). Residues 736–756 (AESTDFFSAKFGVRSISGNPH) are Extracellular-facing. The helical transmembrane segment at 757–777 (ELTAAVYLQVSIVSQALIFVT) threads the bilayer. Residues 778 to 789 (RSRSWSYVERPG) are Cytoplasmic-facing. Residues 790 to 810 (FWLISAFFMAQLIATLIAVYA) traverse the membrane as a helical segment. At 811 to 818 (NWNFARIR) the chain is on the extracellular side. Residues 819-839 (GIGWGWAGVIWLYSIVFYIPL) form a helical membrane-spanning segment. The Cytoplasmic segment spans residues 840-954 (DILKFIIRYS…IEAIQQHYTL (115 aa)). At threonine 886 the chain carries Phosphothreonine. Serine 936 is modified (phosphoserine). The interval 952-954 (YTL) is interaction with 14-3-3 proteins. Threonine 953 is subject to Phosphothreonine.

The protein belongs to the cation transport ATPase (P-type) (TC 3.A.3) family. Type IIIA subfamily. As to quaternary structure, binds to 14-3-3 proteins. The binding is induced by phosphorylation of Thr-953. Binding to 14-3-3 proteins activates the H(+)-ATPase. Anther specific. Expressed in guard cells.

It localises to the membrane. It carries out the reaction ATP + H2O + H(+)(in) = ADP + phosphate + 2 H(+)(out). The plasma membrane H(+) ATPase of plants and fungi generates a proton gradient that drives the active transport of nutrients by H(+)-symport. The resulting external acidification and/or internal alkinization may mediate growth responses. The polypeptide is ATPase 9, plasma membrane-type (AHA9) (Arabidopsis thaliana (Mouse-ear cress)).